The primary structure comprises 262 residues: Protein CUSTOS (262 aa).

Disordered stretches follow at residues 1–79 and 126–262; these read MAAP…LQTT and FTSV…IPAN. Residues 9–18 are compositionally biased toward low complexity; it reads SDSESSNSSS. Positions 51–61 are enriched in polar residues; that stretch reads ANSQLSTSQPS. Serine 61 bears the Phosphoserine mark. Residue threonine 79 is modified to Phosphothreonine. A Phosphoserine modification is found at serine 138. The residue at position 182 (threonine 182) is a Phosphothreonine. The span at 188–199 shows a compositional bias: basic residues; sequence KKKRKLKKKAKK. A compositionally biased stretch (low complexity) spans 200-209; the sequence is VASVDSAVAA. Residues 210–221 show a composition bias toward polar residues; it reads TTPTSMATVQKQ. Phosphothreonine is present on threonine 211. The Nucleolar localization signal (NLS) signature appears at 236-241; the sequence is KKKKKA.

This sequence belongs to the CUSTOS family.

The protein resides in the nucleus envelope. Functionally, plays a role in the regulation of Wnt signaling pathway during early development. The chain is Protein CUSTOS from Homo sapiens (Human).